The sequence spans 699 residues: Homeobox-leucine zipper protein HDG8 (699 aa).

A disordered region spans residues 1–31 (MDNNGGGSSGNEQYTSGDAKQNGKRTCHRHT). The segment covering 10 to 19 (GNEQYTSGDA) has biased composition (polar residues). Residues 22–31 (NGKRTCHRHT) are compositionally biased toward basic residues. A DNA-binding region (homeobox) is located at residues 23-82 (GKRTCHRHTPQQIQRLEAYFKECPHPDERQRNQLCRELKLEPDQIKFWFQNKRTQSKTQE). Residues 89-149 (LLRGENETLQ…LKDHRDRISN (61 aa)) adopt a coiled-coil conformation. The START domain occupies 204–438 (AETDMSLLSE…LERMCERMAL (235 aa)).

The protein belongs to the HD-ZIP homeobox family. Class IV subfamily. In terms of assembly, interacts with ANT. Expressed in the embryo at early stage and in the endosperm.

It localises to the nucleus. Functionally, probable transcription factor. The sequence is that of Homeobox-leucine zipper protein HDG8 from Arabidopsis thaliana (Mouse-ear cress).